Consider the following 347-residue polypeptide: MGARGAPSRRRQAGRRPRYLPTGSFPFLLLLLLLCIQLGGGQKKKENLLAEKVEQLMEWSSRRSVFRMNGDKFRKFIKAPPRNYSMIVMFTALQPQRQCSVCRLANEEYQILANSWRYSSAFCNKLFFSKVDYDEGTDIFQQLNINSAPTFMHFPPKGRPKRADTFDLQRIGFGAEQLAKWIADRTDVHIRVFRPPNYSGTIALALLVSLVGGLLYLRRNNLEFIYNKTGWAMVSLCIVFAMTSGQMWNHIRGPPYAHKNPHNGQVSYIHGSSQVQFVAESHIILVLNAAITMGMDLLNEAATSKGDVGKRRIICLVGLGLVVFFFSFLLSIFRSKYHGYPYSFLIK.

Residues 1–41 (MGARGAPSRRRQAGRRPRYLPTGSFPFLLLLLLLCIQLGGG) form the signal peptide. The Lumenal portion of the chain corresponds to 42 to 196 (QKKKENLLAE…DVHIRVFRPP (155 aa)). The Thioredoxin domain maps to 59–187 (WSSRRSVFRM…LAKWIADRTD (129 aa)). N83 carries N-linked (GlcNAc...) asparagine glycosylation. A disulfide bond links C99 and C102. A helical membrane pass occupies residues 197-217 (NYSGTIALALLVSLVGGLLYL). Topologically, residues 218–221 (RRNN) are cytoplasmic. Residues 222-242 (LEFIYNKTGWAMVSLCIVFAM) form a helical membrane-spanning segment. Over 243–276 (TSGQMWNHIRGPPYAHKNPHNGQVSYIHGSSQVQ) the chain is Lumenal. Residues 277-297 (FVAESHIILVLNAAITMGMDL) form a helical membrane-spanning segment. Over 298–312 (LNEAATSKGDVGKRR) the chain is Cytoplasmic. A helical transmembrane segment spans residues 313-333 (IICLVGLGLVVFFFSFLLSIF). The Lumenal segment spans residues 334–347 (RSKYHGYPYSFLIK).

Belongs to the OST3/OST6 family. As to quaternary structure, accessory component of the STT3B-containing form of the oligosaccharyltransferase (OST) complex. OST exists in two different complex forms which contain common core subunits RPN1, RPN2, OST48, OST4, DAD1 and TMEM258, either STT3A or STT3B as catalytic subunits, and form-specific accessory subunits. OST can form stable complexes with the Sec61 complex or with both the Sec61 and TRAP complexes. The association of TUSC3 or MAGT1 with the STT3B-containing complex seems to be mutually exclusvice.

Its subcellular location is the endoplasmic reticulum membrane. The protein operates within protein modification; protein glycosylation. Functionally, acts as accessory component of the N-oligosaccharyl transferase (OST) complex which catalyzes the transfer of a high mannose oligosaccharide from a lipid-linked oligosaccharide donor to an asparagine residue within an Asn-X-Ser/Thr consensus motif in nascent polypeptide chains. Involved in N-glycosylation of STT3B-dependent substrates. Specifically required for the glycosylation of a subset of acceptor sites that are near cysteine residues; in this function seems to act redundantly with MAGT1. In its oxidized form proposed to form transient mixed disulfides with a glycoprotein substrate to facilitate access of STT3B to the unmodified acceptor site. Also has oxidoreductase-independent functions in the STT3B-containing OST complex possibly involving substrate recognition. Could indirectly play a role in Mg(2+) transport. In Bos taurus (Bovine), this protein is Dolichyl-diphosphooligosaccharide--protein glycosyltransferase subunit TUSC3 (TUSC3).